Here is a 170-residue protein sequence, read N- to C-terminus: Sec-independent protein translocase protein TatB (170 aa).

A helical membrane pass occupies residues 1–21; it reads MIDFGFDKIALIGAVALIVIG. The interval 69-170 is disordered; that stretch reads AARNVEQSVS…VARFRPPRPL (102 aa). A compositionally biased stretch (polar residues) spans 73 to 93; that stretch reads VEQSVSSEVNRTSSEMNQAWE. The segment covering 128-137 has biased composition (basic residues); sequence HPRKNWRLKR.

The protein belongs to the TatB family. The Tat system comprises two distinct complexes: a TatABC complex, containing multiple copies of TatA, TatB and TatC subunits, and a separate TatA complex, containing only TatA subunits. Substrates initially bind to the TatABC complex, which probably triggers association of the separate TatA complex to form the active translocon.

The protein resides in the cell inner membrane. Part of the twin-arginine translocation (Tat) system that transports large folded proteins containing a characteristic twin-arginine motif in their signal peptide across membranes. Together with TatC, TatB is part of a receptor directly interacting with Tat signal peptides. TatB may form an oligomeric binding site that transiently accommodates folded Tat precursor proteins before their translocation. The protein is Sec-independent protein translocase protein TatB of Methylibium petroleiphilum (strain ATCC BAA-1232 / LMG 22953 / PM1).